The primary structure comprises 151 residues: MQIWVDADACPKVVKEVLCRAATRTGLQITFVANHYVPVPTAPNIKSIQVESGFDVADDEIVRRSEAGDLVISGDIPLAAELIEKKVQVLNPRGELYTEATIKARLNIRDFMDTMRASGIQTGGPAALSQTDRREFANQLDRILAKVKKTI.

Belongs to the UPF0178 family.

In Aliivibrio salmonicida (strain LFI1238) (Vibrio salmonicida (strain LFI1238)), this protein is UPF0178 protein VSAL_I0701.